A 61-amino-acid polypeptide reads, in one-letter code: Small ribosomal subunit protein uS14C (61 aa).

Residues Cys-24, Cys-27, Cys-40, and Cys-43 each contribute to the Zn(2+) site.

This sequence belongs to the universal ribosomal protein uS14 family. Zinc-binding uS14 subfamily. In terms of assembly, part of the 30S ribosomal subunit. Contacts proteins S3 and S10. Zn(2+) is required as a cofactor.

Functionally, binds 16S rRNA, required for the assembly of 30S particles and may also be responsible for determining the conformation of the 16S rRNA at the A site. This is Small ribosomal subunit protein uS14C from Bacillus licheniformis (strain ATCC 14580 / DSM 13 / JCM 2505 / CCUG 7422 / NBRC 12200 / NCIMB 9375 / NCTC 10341 / NRRL NRS-1264 / Gibson 46).